The primary structure comprises 331 residues: 6-phosphogluconolactonase (331 aa).

Lys287 carries the N6-acetyllysine modification.

Belongs to the cycloisomerase 2 family.

The catalysed reaction is 6-phospho-D-glucono-1,5-lactone + H2O = 6-phospho-D-gluconate + H(+). The protein operates within carbohydrate degradation; pentose phosphate pathway; D-ribulose 5-phosphate from D-glucose 6-phosphate (oxidative stage): step 2/3. Catalyzes the hydrolysis of 6-phosphogluconolactone to 6-phosphogluconate. The chain is 6-phosphogluconolactonase from Escherichia coli (strain SMS-3-5 / SECEC).